Reading from the N-terminus, the 788-residue chain is Cadherin-10 (788 aa).

Positions 1-22 are cleaved as a signal peptide; that stretch reads MTIHQFLLLFLFWVCLPHFCSP. Positions 23-54 are excised as a propeptide; sequence EIMFRRTPVPQQRILSSRVPRSDGKILHRQKR. Cadherin domains follow at residues 55 to 160, 161 to 269, 270 to 384, 385 to 487, and 488 to 606; these read GWMW…EPTF, PEEI…PPRF, PQNT…PPVF, SRSS…DNAP, and QFAV…LLLP. The Extracellular portion of the chain corresponds to 55–613; it reads GWMWNQFFLL…LLPAGLSTGA (559 aa). N256 carries N-linked (GlcNAc...) asparagine glycosylation. N-linked (GlcNAc...) asparagine glycosylation is found at N438, N456, and N534. The helical transmembrane segment at 614–634 threads the bilayer; sequence LIAILLCIIILLVIVVLFAAL. The Cytoplasmic portion of the chain corresponds to 635 to 788; that stretch reads KRQRKKEPLI…YGGGESDKDS (154 aa). 2 positions are modified to phosphoserine: S784 and S788.

As to expression, predominantly expressed in brain. Also found in adult and fetal kidney. Very low levels detected in prostate and fetal lung.

The protein resides in the cell membrane. In terms of biological role, cadherins are calcium-dependent cell adhesion proteins. They preferentially interact with themselves in a homophilic manner in connecting cells; cadherins may thus contribute to the sorting of heterogeneous cell types. The polypeptide is Cadherin-10 (CDH10) (Homo sapiens (Human)).